The primary structure comprises 505 residues: Nicotinamide phosphoribosyltransferase (505 aa).

Arginine 196 provides a ligand contact to diphosphate. Aspartate 219 contacts beta-nicotinamide D-ribonucleotide. Diphosphate contacts are provided by histidine 246 and arginine 314. Beta-nicotinamide D-ribonucleotide-binding positions include 314-316, 369-370, and arginine 408; these read RPD and GD.

This sequence belongs to the NAPRTase family.

The catalysed reaction is beta-nicotinamide D-ribonucleotide + diphosphate = 5-phospho-alpha-D-ribose 1-diphosphate + nicotinamide + H(+). Its pathway is cofactor biosynthesis; NAD(+) biosynthesis; nicotinamide D-ribonucleotide from 5-phospho-alpha-D-ribose 1-diphosphate and nicotinamide: step 1/1. 10-fold more active in the presence of saturating ATP. Its function is as follows. Catalyzes the condensation of nicotinamide with 5-phosphoribosyl-1-pyrophosphate to yield nicotinamide mononucleotide, an intermediate in the biosynthesis of NAD. Functions in the nondeamidating salvage pathway for production of NAD from nicotinamide. Displays a strict preference for nicotinamide over nicotinate substrate. The chain is Nicotinamide phosphoribosyltransferase from Acinetobacter baylyi (strain ATCC 33305 / BD413 / ADP1).